The following is a 193-amino-acid chain: dITP/XTP pyrophosphatase (193 aa).

7 to 12 provides a ligand contact to substrate; the sequence is SENENK. The active-site Proton acceptor is the aspartate 65. Aspartate 65 provides a ligand contact to Mg(2+). Substrate-binding positions include serine 66, 144–147, lysine 167, and 172–173; these read FGYD and HR.

Belongs to the HAM1 NTPase family. Homodimer. The cofactor is Mg(2+).

It catalyses the reaction XTP + H2O = XMP + diphosphate + H(+). The catalysed reaction is dITP + H2O = dIMP + diphosphate + H(+). It carries out the reaction ITP + H2O = IMP + diphosphate + H(+). Its function is as follows. Pyrophosphatase that catalyzes the hydrolysis of nucleoside triphosphates to their monophosphate derivatives, with a high preference for the non-canonical purine nucleotides XTP (xanthosine triphosphate), dITP (deoxyinosine triphosphate) and ITP. Seems to function as a house-cleaning enzyme that removes non-canonical purine nucleotides from the nucleotide pool, thus preventing their incorporation into DNA/RNA and avoiding chromosomal lesions. This Tropheryma whipplei (strain TW08/27) (Whipple's bacillus) protein is dITP/XTP pyrophosphatase.